A 226-amino-acid chain; its full sequence is Thiopurine S-methyltransferase (226 aa).

S-adenosyl-L-methionine is bound by residues Trp10, Leu47, Glu68, and Arg130.

This sequence belongs to the class I-like SAM-binding methyltransferase superfamily. TPMT family.

The protein resides in the cytoplasm. It carries out the reaction S-adenosyl-L-methionine + a thiopurine = S-adenosyl-L-homocysteine + a thiopurine S-methylether.. The chain is Thiopurine S-methyltransferase from Shewanella sediminis (strain HAW-EB3).